The sequence spans 617 residues: Type IV inositol polyphosphate 5-phosphatase 6 (617 aa).

Disordered stretches follow at residues 30–62 and 241–330; these read EFQADDPSSAGIEVEHRSSFSAEKAPSTIKNTK and DFDP…VLYS. A compositionally biased stretch (low complexity) spans 242-253; that stretch reads FDPSFRGSSSSH. Basic and acidic residues predominate over residues 254–290; sequence RPSDYSRRPSDYSRRPSDYSRRPSDYSRRPSDSRPSD. A compositionally biased stretch (low complexity) spans 291–311; that stretch reads YSRPSDYYSRPSDYSRPSDFS. Catalytic regions lie at residues 458–473 and 538–553; these read DRVIWLGDLNYRIALS and KRRTPAWCDRILWFGE.

The protein belongs to the inositol polyphosphate 5-phosphatase family. In terms of tissue distribution, broadly expressed in emerging organs. Mostly localized in procambium of growing organs. Restricted to vascular differentiating cells of young organs.

The enzyme catalyses a 1,2-diacyl-sn-glycero-3-phospho-(1D-myo-inositol-4,5-bisphosphate) + H2O = a 1,2-diacyl-sn-glycero-3-phospho-(1D-myo-inositol 4-phosphate) + phosphate. It catalyses the reaction a 1,2-diacyl-sn-glycero-3-phospho-(1D-myo-inositol-3,4,5-trisphosphate) + H2O = a 1,2-diacyl-sn-glycero-3-phospho-(1D-myo-inositol-3,4-bisphosphate) + phosphate. Has phosphatase activity toward PtdIns(4,5)P2 and PtdIns(3,4,5)P3. Required for the patterning of procambium and during the differentiation of vascular tissues. Acts before the acquisition of preprocambial identity. Seems to be also involved in the abscisic acid (ABA) signaling pathway. Acts redundantly with CVL1 for maintaining vascular continuity. Regulates phosphoinositide-dependent VAN3 localization. The polypeptide is Type IV inositol polyphosphate 5-phosphatase 6 (Arabidopsis thaliana (Mouse-ear cress)).